The sequence spans 618 residues: MLLQKINSPKDLKRLSIDELKTLSAEIREIIINTVENNGGHLASNLGTVELTLALHYVFDTPEDKIIWDVGHQAYTHKLVTGRAKDFHTLRQFGGISGYIAPWESEYDHFAVGHAGTSLSAALGFAKARDLKGEKYKVIAVIGDGALTSGMALEALNQIGYLNTDLIVVLNDNEHSISPNVGAIALYLAKLRKHPLYRFFKQTTQNLLKNSSIGKGLLAFDLKLERSLKSLLLENPMFEYWGFKYFGPFDGHDIPVLISVFKGIKDNLSCPVLIHITTKKGIGHKDAEATPSKFHSIGAKIEREKKVPTYTEVFGKALVELGEKYPEIVAITAAMPEGTGLSYFAQRFPERFFDVGIAEEHAVTFAAGLAKNGLKPVVAIYSTFLQRAFDQIIHDVCLQKLPIVFVLDRAGIVSDDGPTHQGIFDLSYLRLIPNMVISAPKDESELRDLLYTAINYPGPFAIRYPKSKGVGIGLKDHFERIEIGKSEILKYGKNVLILAIGSMVYPALEAESILKTEGISPTIVNVRFLKPLDVLTLEELISSHDVIITVEENVITGGLFGAISELVNILKLNKKVLPISLPDKFIEQGNAQLLRDIYGLSGHKIAEKIISVLEDVKV.

Thiamine diphosphate is bound by residues His72 and 113 to 115 (GHA). A Mg(2+)-binding site is contributed by Asp144. Residues 145-146 (GA), Asn173, His284, and Glu359 contribute to the thiamine diphosphate site. Asn173 is a Mg(2+) binding site.

The protein belongs to the transketolase family. DXPS subfamily. As to quaternary structure, homodimer. It depends on Mg(2+) as a cofactor. Thiamine diphosphate is required as a cofactor.

The enzyme catalyses D-glyceraldehyde 3-phosphate + pyruvate + H(+) = 1-deoxy-D-xylulose 5-phosphate + CO2. It functions in the pathway metabolic intermediate biosynthesis; 1-deoxy-D-xylulose 5-phosphate biosynthesis; 1-deoxy-D-xylulose 5-phosphate from D-glyceraldehyde 3-phosphate and pyruvate: step 1/1. Catalyzes the acyloin condensation reaction between C atoms 2 and 3 of pyruvate and glyceraldehyde 3-phosphate to yield 1-deoxy-D-xylulose-5-phosphate (DXP). This is 1-deoxy-D-xylulose-5-phosphate synthase from Dictyoglomus thermophilum (strain ATCC 35947 / DSM 3960 / H-6-12).